The sequence spans 3926 residues: Hybrid PKS-NRPS synthetase LUC5 (3926 aa).

A Ketosynthase family 3 (KS3) domain is found at 8-439; sequence REPIAIVGTA…GTNAHAIIES (432 aa). Catalysis depends on for beta-ketoacyl synthase activity residues Cys181, His318, and His359. The tract at residues 545-863 is malonyl-CoA:ACP transacylase (MAT) domain; it reads VFTGQGAQWP…QGALTRNVHD (319 aa). The interval 932-1065 is N-terminal hotdog fold; it reads HPLLGTRSTE…GHLRVDFGSE (134 aa). Residues 932–1225 form a dehydratase (DH) domain region; that stretch reads HPLLGTRSTE…GLTCTSLLRP (294 aa). The PKS/mFAS DH domain maps to 932–1228; sequence HPLLGTRSTE…CTSLLRPGPS (297 aa). His964 acts as the Proton acceptor; for dehydratase activity in catalysis. The C-terminal hotdog fold stretch occupies residues 1081 to 1228; it reads LTSVNIERFY…CTSLLRPGPS (148 aa). Catalysis depends on Asp1138, which acts as the Proton donor; for dehydratase activity. The interval 1344 to 1572 is C-methyltransferase (CMeT) domain; it reads IRAVGENLTE…VNDFYDPSKY (229 aa). The tract at residues 2091 to 2265 is ketoreductase (KR) domain 1; sequence TYLLAGCTGG…AASVIHIGMI (175 aa). Positions 2371 to 2448 constitute a Carrier 1 domain; the sequence is EMLEVVEEEF…EICSTAVASL (78 aa). Ser2408 bears the O-(pantetheine 4'-phosphoryl)serine mark. Residues 2474-2506 show a composition bias toward polar residues; the sequence is VSGNGSSSSRAPTEFNSSTLKSGAQSTQGTSVS. Residues 2474–2518 form a disordered region; it reads VSGNGSSSSRAPTEFNSSTLKSGAQSTQGTSVSGDKDTNSVDGSA. The segment covering 2507 to 2518 has biased composition (basic and acidic residues); that stretch reads GDKDTNSVDGSA. The interval 2525–2810 is condensation; it reads PLSFAQERIW…VNLLPLRFQL (286 aa). The adenylation stretch occupies residues 2979–3389; the sequence is DWVKRQPDAI…RIAGDSQIKL (411 aa). Residues 3501–3580 form the Carrier 2 domain; sequence ETLTTTQERL…GMAAKIDGST (80 aa). The residue at position 3540 (Ser3540) is an O-(pantetheine 4'-phosphoryl)serine. Positions 3619-3840 are thiolester reductase (TE) domain; sequence LTGATGFLGL…DFVPVEQVAD (222 aa).

It in the C-terminal section; belongs to the NRP synthetase family.

Its pathway is mycotoxin biosynthesis. Its function is as follows. Hybrid PKS-NRPS synthetase; part of the gene cluster that mediates the biosynthesis of the mycotoxin lucilactaene and the lucilactaene-related compound NG-391 that act as cell cycle inhibitors with potent growth inhibitory activity against malarial parasites, moderate growth inhibitory activity against cancer cells, and no activity against bacteria and fungi. The hybrid PKS-NRPS synthetase LUC5 is responsible for the condensation of one acetyl-coenzyme A (CoA) unit with six malonyl-CoA units and the amide linkage of the arising heptaketide and homoserine, subsequently releasing the first intermediate prelucilactaene B, as an alcohol with an open ring structure. Lucilactaene and NG-391 lack the 7-methyl group present in fusarins which is inserted in fusarins by the C-methyltransferase (CMeT) domain of the fusarin synthetase FUS1, suggesting that the CMet domain of LUC5 does not methylate this position. Within the pathway, both the cytochrome P450 monooxygenase LUC2 and the hydrolase LUC6 function in parallel in modification of prelucilactaene B. LUC6 may catalyze the 2-pyrrolidone ring formation to form prelucilactaene C from prelucilactaene B, followed by C-15 hydroxylation by the same enzyme to give prelucilactaene D, which is then converted to prelucilactaene E by epoxidation, and finally to prelucilactaene F by cyclization. Prelucilactane D, prelucilactaene E, and prelucilactaene F can be converted to dihydrolucilactaene, NG391, and lucilactaene, respectively, via C-20 methyl group hydroxylation by the cytochrome P450 monooxygenase LUC2. However, LUC2, unlike FUS8 in fusarin C biosynthesis, is not enough for the full oxidation of the C-20 methyl group into carboxylic acid, which is a prerequisite for the final methylation step. The aldehyde dehydrogenase LUC3 is involved in the biosynthesis by further oxidation of the C-20 alcoholic analog prelucilactaene G into a carboxylic derivative. This unidentified carboxylic derivative may be converted to demethyllucilactaene. As the last step, the methyltransferase LUC1 methylates the hydroxyl group at C-21 of demethyllucilactaene to generate lucilactaene. This Fusarium sp protein is Hybrid PKS-NRPS synthetase LUC5.